Here is a 425-residue protein sequence, read N- to C-terminus: Glutamyl-tRNA reductase (425 aa).

Substrate is bound by residues 49-52 (TCNR), Ser107, 112-114 (EPQ), and Gln118. Cys50 serves as the catalytic Nucleophile. 187 to 192 (GAGETI) contacts NADP(+).

It belongs to the glutamyl-tRNA reductase family. Homodimer.

The catalysed reaction is (S)-4-amino-5-oxopentanoate + tRNA(Glu) + NADP(+) = L-glutamyl-tRNA(Glu) + NADPH + H(+). It participates in porphyrin-containing compound metabolism; protoporphyrin-IX biosynthesis; 5-aminolevulinate from L-glutamyl-tRNA(Glu): step 1/2. Its function is as follows. Catalyzes the NADPH-dependent reduction of glutamyl-tRNA(Glu) to glutamate 1-semialdehyde (GSA). The chain is Glutamyl-tRNA reductase from Pseudomonas putida (strain W619).